Reading from the N-terminus, the 170-residue chain is 2-oxo-4-hydroxy-4-carboxy-5-ureidoimidazoline decarboxylase (170 aa).

The active-site Proton donor is the H67. Substrate is bound by residues P68, 84 to 88, and 119 to 123; these read SQREQ and FVLAL.

The protein belongs to the OHCU decarboxylase family.

It is found in the peroxisome. It catalyses the reaction 5-hydroxy-2-oxo-4-ureido-2,5-dihydro-1H-imidazole-5-carboxylate + H(+) = (S)-allantoin + CO2. It functions in the pathway purine metabolism; urate degradation; (S)-allantoin from urate: step 3/3. Catalyzes the stereoselective decarboxylation of 2-oxo-4-hydroxy-4-carboxy-5-ureidoimidazoline (OHCU) to (S)-allantoin. This Bos taurus (Bovine) protein is 2-oxo-4-hydroxy-4-carboxy-5-ureidoimidazoline decarboxylase (URAD).